Here is a 410-residue protein sequence, read N- to C-terminus: Transcription factor Dp-1 (410 aa).

Lysine 3 carries the N6-acetyllysine modification. Serine 23 carries the post-translational modification Phosphoserine; by CDK2. The tract at residues 77–114 is disordered; that stretch reads VVGSPHTPNTHFVSQNQPSDPSPWSAGKRNRKGEKNGK. Residues 82-95 show a composition bias toward polar residues; it reads HTPNTHFVSQNQPS. The span at 104–114 shows a compositional bias: basic residues; sequence KRNRKGEKNGK. An interaction with CEBPA region spans residues 105-127; sequence RNRKGEKNGKGLRHFSMKVCEKV. The DNA-binding element occupies 113 to 195; it reads GKGLRHFSMK…KKEIKWIGLP (83 aa). Residues 161–195 carry the DEF box motif; the sequence is DQKNIRRRVYDALNVLMAMNIISKEKKEIKWIGLP. The interval 204 to 277 is dimerization; it reads SLEVERQRRL…KKTVIDCSIS (74 aa). The tract at residues 211–327 is enhances binding of RB protein to E2F; the sequence is RRLERIKQKQ…DLRVARSLVP (117 aa). Residues 214–246 are DCB1; sequence ERIKQKQSQLQELILQQIAFKNLVQRNRQVEQQ. The interval 259–315 is DCB2; it reads LPFIIVNTSKKTVIDCSISNDKFEYLFNFDNTFEIHDDIEVLKRMGMACGLESGSCS. A disordered region spans residues 370–410; it reads GALATSSSGSQYSGSRVETPVSCVGEDDEDDEDFNENEEED. The span at 375-384 shows a compositional bias: low complexity; that stretch reads SSSGSQYSGS. Residues 394–410 show a composition bias toward acidic residues; it reads GEDDEDDEDFNENEEED.

This sequence belongs to the E2F/DP family. In terms of assembly, component of the E2F:DP transcription factor complex. Forms heterodimers with E2F family members. The complex can interact with hypophosphorylated retinoblastoma protein RB1 and related proteins (RBL1 and RBL2) that inhibit the E2F transactivation domain. This repression involves recruitment of histone deacetylase (HDAC). During the cell cycle, from mid-to-late G1 phase, RB family members become phosphorylated, detach from the DRTF1/E2F complex to render E2F transcriptionally active. Part of the E2F6.com-1 complex in G0 phase is composed of E2F6, MGA, MAX, TFDP1, CBX3, BAT8, EUHMTASE1, RING1, RNF2, MBLR, L3MBTL2 YAF2. Component of the DREAM complex (also named LINC complex) at least composed of E2F4, E2F5, LIN9, LIN37, LIN52, LIN54, MYBL1, MYBL2, RBL1, RBL2, RBBP4, TFDP1 and TFDP2. The complex exists in quiescent cells where it represses cell cycle-dependent genes. It dissociates in S phase when LIN9, LIN37, LIN52 and LIN54 form a subcomplex that binds to MYBL2. The complex TFDP1:E2F1 interacts with CEBPA; the interaction prevents CEBPA binding to target gene promoters and represses its transcriptional activity. Post-translationally, ubiquitinated by the BCR(KBTBD5) complex, leading to its subsequent degradation. Phosphorylation by E2F1-bound cyclin A-CDK2, in the S phase, inhibits E2F-mediated DNA binding and transactivation.

The protein localises to the nucleus. The protein resides in the cytoplasm. Functionally, can stimulate E2F-dependent transcription. Binds DNA cooperatively with E2F family members through the E2 recognition site, 5'-TTTC[CG]CGC-3', found in the promoter region of a number of genes whose products are involved in cell cycle regulation or in DNA replication. The E2F1:DP complex appears to mediate both cell proliferation and apoptosis. Blocks adipocyte differentiation by repressing CEBPA binding to its target gene promoters. The sequence is that of Transcription factor Dp-1 (TFDP1) from Bos taurus (Bovine).